The chain runs to 854 residues: MLSSNDQKLEKLDSFYRPPVSKQRTSAEIISEARNALRTVRTQRPFTPREDQRKLFGPASSRSPENRPPSSFSLHASSFELSDSKPISGTRLRPLELKPKAPASPGTEDACLSFPKAPLDPAKIRKISGARARFYRAASQGMLLPDRSPPAAHSKTVDESSKPVSVGSSTARRNGTHLTASSATGQLKSPPLLTCDQGFQETTEQEVSLLSQLRRGGDPGKRRARASSCPSSSDLSRKETRAASRASSQEQETDTEVDEVFWKARIVPILHELENEEDIEEMCAACTQLHRTLEEARMLGKKFKRRTVLLKALYKLVDADSDPLSLKLAKLILALKVSGKNLLNVCKLIFKISRNEKNDTLMQEDNILESLLEVLRAEELQSNTEAFLYCMGALKFVSGSPGFLTEMVNKGAVEILAQLIKEMTEDTEKHGVCLPDSGHLLVQTTATLRNLVDSPLTRSKLLNMGAFPHLCTVMEQHADDKDICTNIARIFSKLTSYRDCCAALASYSRCYALFLSLLNKYQKNQDLVIRIVFILGNLTAKSNQARELFSRETGSVETLLTLFQSFYHHKENSPKLQLSEAKPQAEAEDVLVKLTRVLANIAIHPRIGPVLAANPRVVGLLLRTLESKSLGDCEELVINTIAAINNLSFYQVKSSVLQHRKLYVAELLLRLLVSNNMERILEAVRVFGNLSQDHDVCNFLMQKNVHKFMITLLEAKHQDICFSACGVLLNLTVDKEKRAILKEGGGIKKLVDCLRDFGPSDWQLACLVCKTLWNFSENITNASECFGDDVANTLLILLSTFLDEELALNGSFDQDLESYHRLHWETEFKPVAQQLLQRIQSHHSLLEPLPVPSF.

Disordered regions lie at residues 1–116, 140–194, and 206–255; these read MLSS…SFPK, QGML…PLLT, and EVSL…ETDT. The segment covering 58–73 has biased composition (low complexity); it reads PASSRSPENRPPSSFS. 2 stretches are compositionally biased toward polar residues: residues 74–87 and 162–187; these read LHAS…SKPI and KPVS…TGQL. ARM repeat units follow at residues 255-294, 298-337, 356-396, 401-442, 455-496, 499-540, 544-583, 585-605, 606-649, 651-692, 694-733, and 735-777; these read TEVD…RTLE, MLGK…ALKV, EKND…ALKF, PGFL…HLLV, PLTR…KLTS, DCCA…NLTA, QARE…EAKP, AEAE…AIHP, RIGP…NLSF, QVKS…NLSQ, HDVC…NLTV, and KEKR…NFSE.

Required for sperm flagellum axoneme organization and function. Involved in axonemal central pair complex assembly and/or stability. The protein is Armadillo repeat-containing protein 2 of Mus musculus (Mouse).